The chain runs to 244 residues: 3-deoxy-manno-octulosonate cytidylyltransferase (244 aa).

It belongs to the KdsB family.

It localises to the cytoplasm. The enzyme catalyses 3-deoxy-alpha-D-manno-oct-2-ulosonate + CTP = CMP-3-deoxy-beta-D-manno-octulosonate + diphosphate. Its pathway is nucleotide-sugar biosynthesis; CMP-3-deoxy-D-manno-octulosonate biosynthesis; CMP-3-deoxy-D-manno-octulosonate from 3-deoxy-D-manno-octulosonate and CTP: step 1/1. The protein operates within bacterial outer membrane biogenesis; lipopolysaccharide biosynthesis. Functionally, activates KDO (a required 8-carbon sugar) for incorporation into bacterial lipopolysaccharide in Gram-negative bacteria. The protein is 3-deoxy-manno-octulosonate cytidylyltransferase of Dichelobacter nodosus (strain VCS1703A).